The sequence spans 514 residues: Cytochrome P450 71AP13 (514 aa).

Residues His20–Tyr37 traverse the membrane as a helical segment. 2 N-linked (GlcNAc...) asparagine glycosylation sites follow: Asn127 and Asn184. Position 455 (Cys455) interacts with heme.

The protein belongs to the cytochrome P450 family. Requires heme as cofactor. In terms of tissue distribution, expressed in fruit kernel, seedlings, leaves and stems.

The protein resides in the membrane. The protein is Cytochrome P450 71AP13 of Prunus mume (Japanese apricot).